The following is a 489-amino-acid chain: Diaminopimelate decarboxylase 2, chloroplastic (489 aa).

The transit peptide at 1–50 directs the protein to the chloroplast; sequence MAAVTQFLSQPSSIRGTLNQYQLNQTSLSRIPFLSLKSTLKPLKRLSVKA. Residue A51 is modified to N-acetylalanine. K130 is subject to N6-(pyridoxal phosphate)lysine. Pyridoxal 5'-phosphate-binding positions include G309 and 345–348; that span reads EPGR. Substrate-binding residues include R348, R384, and Y388. C416 (proton donor) is an active-site residue. Residues E417 and Y445 each coordinate substrate. A pyridoxal 5'-phosphate-binding site is contributed by Y445.

This sequence belongs to the Orn/Lys/Arg decarboxylase class-II family. LysA subfamily. In terms of assembly, homodimer. Pyridoxal 5'-phosphate serves as cofactor.

It is found in the plastid. The protein resides in the chloroplast. The catalysed reaction is meso-2,6-diaminopimelate + H(+) = L-lysine + CO2. The protein operates within amino-acid biosynthesis; L-lysine biosynthesis via DAP pathway; L-lysine from DL-2,6-diaminopimelate: step 1/1. Functionally, specifically catalyzes the decarboxylation of meso-diaminopimelate (meso-DAP) to L-lysine. The protein is Diaminopimelate decarboxylase 2, chloroplastic (LYSA2) of Arabidopsis thaliana (Mouse-ear cress).